A 78-amino-acid polypeptide reads, in one-letter code: Large ribosomal subunit protein bL28 (78 aa).

The disordered stretch occupies residues 1 to 20; it reads MSRVCQVTGKGPVTGNNISH.

It belongs to the bacterial ribosomal protein bL28 family.

This is Large ribosomal subunit protein bL28 from Pseudomonas fluorescens (strain ATCC BAA-477 / NRRL B-23932 / Pf-5).